A 304-amino-acid chain; its full sequence is GTPase Era (304 aa).

An Era-type G domain is found at 9–177; it reads HSGFVAIVGR…VTTLSQHMPE (169 aa). The interval 17-24 is G1; sequence GRPNVGKS. A GTP-binding site is contributed by 17 to 24; that stretch reads GRPNVGKS. A G2 region spans residues 43–47; sequence QTTRN. The segment at 64–67 is G3; that stretch reads DTPG. GTP is bound by residues 64–68 and 127–130; these read DTPGI and NKID. The interval 127–130 is G4; that stretch reads NKID. Positions 156–158 are G5; sequence ISA. Positions 208–285 constitute a KH type-2 domain; the sequence is TRQEVPHSVA…YLELWVKVSE (78 aa).

Belongs to the TRAFAC class TrmE-Era-EngA-EngB-Septin-like GTPase superfamily. Era GTPase family. Monomer.

The protein resides in the cytoplasm. It is found in the cell membrane. An essential GTPase that binds both GDP and GTP, with rapid nucleotide exchange. Plays a role in 16S rRNA processing and 30S ribosomal subunit biogenesis and possibly also in cell cycle regulation and energy metabolism. This Pediococcus pentosaceus (strain ATCC 25745 / CCUG 21536 / LMG 10740 / 183-1w) protein is GTPase Era.